A 981-amino-acid polypeptide reads, in one-letter code: Ubiquitin carboxyl-terminal hydrolase 15 (981 aa).

A2 is subject to N-acetylalanine. Residues 2–223 (AEGGAADLDT…KNEDGTWPRG (222 aa)) are mediates interaction with SART3. The 112-residue stretch at 7-118 (ADLDTQRSDI…GQEPIARKVV (112 aa)) folds into the DUSP domain. Positions 216–237 (EDGTWPRGPSTPKSPGASNFST) are disordered. Residue T226 is modified to Phosphothreonine. Over residues 226 to 237 (TPKSPGASNFST) the composition is skewed to polar residues. 2 positions are modified to phosphoserine: S229 and S242. The 645-residue stretch at 289 to 933 (CGLSNLGNTC…AAYVLFYQRQ (645 aa)) folds into the USP domain. Catalysis depends on C298, which acts as the Nucleophile. T602 is modified (phosphothreonine). The segment at 633–694 (CCEDQNINGN…GGDNDSENGL (62 aa)) is disordered. Positions 656 to 673 (METDEPDDESSQDQELPS) are enriched in acidic residues. The Proton acceptor role is filled by H891. A disordered region spans residues 952-981 (SAATGIPLESDEDSNDNDNDLENENCMHTN). The span at 960-974 (ESDEDSNDNDNDLEN) shows a compositional bias: acidic residues. Phosphoserine is present on residues S961 and S965.

This sequence belongs to the peptidase C19 family. A homodimer structure has been reported; however it is unclear whether the protein form a homodimer in vivo. Identified in a complex with the COP9 signalosome complex (CSN). Interacts with SMAD1, SMAD2 and SMAD3; the interaction is direct. Forms a complex with SMURF2 and SMAD7. Interacts with TGFBR1. Interacts with SART3; the interaction is direct. May interact with RNF20 and RNF40. May interact with PRKN. Interacts with INCA1. In terms of processing, phosphorylated. Phosphorylation protects against ubiquitination and subsequent degradation by the proteasome. Ubiquitinated, leading to degradation by the proteasome. As to expression, widely expressed with highest levels in the brain and spleen, and lowest levels in the muscles (at protein level). In the midbrain, strong expression in neurons including the dopaminergic neurons (at protein level). Widely expressed with highest levels in testis, heart and liver.

The protein localises to the cytoplasm. Its subcellular location is the nucleus. It localises to the mitochondrion. It catalyses the reaction Thiol-dependent hydrolysis of ester, thioester, amide, peptide and isopeptide bonds formed by the C-terminal Gly of ubiquitin (a 76-residue protein attached to proteins as an intracellular targeting signal).. Functionally, hydrolase that removes conjugated ubiquitin from target proteins and regulates various pathways such as the TGF-beta receptor signaling, NF-kappa-B and RNF41/NRDP1-PRKN pathways. Acts as a key regulator of TGF-beta receptor signaling pathway, but the precise mechanism is still unclear: according to a report, acts by promoting deubiquitination of monoubiquitinated R-SMADs (SMAD1, SMAD2 and/or SMAD3), thereby alleviating inhibition of R-SMADs and promoting activation of TGF-beta target genes. According to another reports, regulates the TGF-beta receptor signaling pathway by mediating deubiquitination and stabilization of TGFBR1, leading to an enhanced TGF-beta signal. Able to mediate deubiquitination of monoubiquitinated substrates, 'Lys-27'-, 'Lys-48'- and 'Lys-63'-linked polyubiquitin chains. May also regulate gene expression and/or DNA repair through the deubiquitination of histone H2B. Acts as an inhibitor of mitophagy by counteracting the action of parkin (PRKN): hydrolyzes cleavage of 'Lys-48'- and 'Lys-63'-linked polyubiquitin chains attached by parkin on target proteins such as MFN2, thereby reducing parkin's ability to drive mitophagy. Acts as an associated component of COP9 signalosome complex (CSN) and regulates different pathways via this association: regulates NF-kappa-B by mediating deubiquitination of NFKBIA and deubiquitinates substrates bound to VCP. Involved in endosome organization by mediating deubiquitination of SQSTM1: ubiquitinated SQSTM1 forms a molecular bridge that restrains cognate vesicles in the perinuclear region and its deubiquitination releases target vesicles for fast transport into the cell periphery. Acts as a negative regulator of antifungal immunity by mediating 'Lys-27'-linked deubiquitination of CARD9, thereby inactivating CARD9. The chain is Ubiquitin carboxyl-terminal hydrolase 15 (Usp15) from Mus musculus (Mouse).